The primary structure comprises 273 residues: DnaJ homolog subfamily C member 27 (273 aa).

The interval 1–18 is required for interaction with MAPK1; the sequence is MEASMPKRKEPGKSLRIK. GTP-binding positions include 23–30, 71–75, and 134–137; these read GNAEVGKS, DMAGD, and NKID. The 57-residue stretch at 217 to 273 folds into the J domain; sequence DSWDMLGVKPGASRDEVNKAYRKLAVLLHPDKCVAPGSEDAFKAVVNARTALLKNIK.

The protein belongs to the small GTPase superfamily. Rab family. As to quaternary structure, interacts directly with MAPK1 (wild-type and kinase-deficient forms). Interacts directly (in GTP-bound form) with MAP2K1 (wild-type and kinase-deficient forms).

Its subcellular location is the nucleus. GTPase which can activate the MEK/ERK pathway and induce cell transformation when overexpressed. May act as a nuclear scaffold for MAPK1, probably by association with MAPK1 nuclear export signal leading to enhanced ERK1/ERK2 signaling. The chain is DnaJ homolog subfamily C member 27 (DNAJC27) from Bos taurus (Bovine).